The following is a 1234-amino-acid chain: PAN2-PAN3 deadenylation complex catalytic subunit PAN2 (1234 aa).

Residues 12–32 are disordered; sequence LKNSNNNSNSNSSSNNSSNGV. A compositionally biased stretch (low complexity) spans 14-30; it reads NSNNNSNSNSSSNNSSN. WD repeat units lie at residues 176–213, 272–315, and 342–381; these read NHTG…SIKT, AFPA…VYHA, and QQQP…TLSK. The disordered stretch occupies residues 323-346; it reads PLPPAGSSAAQQQKQQQQQQQQPH. Low complexity predominate over residues 333–344; it reads QQQKQQQQQQQQ. A linker region spans residues 383 to 537; that stretch reads FVNFPQEIER…DSIFQCQNDE (155 aa). The USP domain occupies 538–946; that stretch reads KIPNCYSRLQ…KPVIVIYQEV (409 aa). A disordered region spans residues 751-775; the sequence is PNTQQDQQQQQQQQQQQQQQQQPTN. Residues 754-772 are compositionally biased toward low complexity; it reads QQDQQQQQQQQQQQQQQQQ. The a divalent metal cation site is built by D1004, E1006, D1138, and D1191. The Exonuclease domain occupies 1072-1199; that stretch reads GEAFIDDYIV…EDARTALLLY (128 aa).

This sequence belongs to the peptidase C19 family. PAN2 subfamily. In terms of assembly, forms a heterotrimer with an asymmetric homodimer of the regulatory subunit PAN3 to form the poly(A)-nuclease (PAN) deadenylation complex. The cofactor is a divalent metal cation.

The protein resides in the cytoplasm. The catalysed reaction is Exonucleolytic cleavage of poly(A) to 5'-AMP.. Its activity is regulated as follows. Positively regulated by the regulatory subunit PAN3. In terms of biological role, catalytic subunit of the poly(A)-nuclease (PAN) deadenylation complex, one of two cytoplasmic mRNA deadenylases involved in mRNA turnover. PAN specifically shortens poly(A) tails of RNA and the activity is stimulated by poly(A)-binding protein PAB1. PAN deadenylation is followed by rapid degradation of the shortened mRNA tails by the CCR4-NOT complex. Deadenylated mRNAs are then degraded by two alternative mechanisms, namely exosome-mediated 3'-5' exonucleolytic degradation, or deadenylation-dependent mRNA decaping and subsequent 5'-3' exonucleolytic degradation by XRN1. May also be involved in post-transcriptional maturation of mRNA poly(A) tails. This is PAN2-PAN3 deadenylation complex catalytic subunit PAN2 from Lodderomyces elongisporus (strain ATCC 11503 / CBS 2605 / JCM 1781 / NBRC 1676 / NRRL YB-4239) (Yeast).